A 901-amino-acid polypeptide reads, in one-letter code: Protein translocase subunit SecA (901 aa).

ATP contacts are provided by residues glutamine 87, 105-109 (GEGKT), and aspartate 512. Zn(2+) is bound by residues cysteine 885, cysteine 887, cysteine 896, and histidine 897.

The protein belongs to the SecA family. As to quaternary structure, monomer and homodimer. Part of the essential Sec protein translocation apparatus which comprises SecA, SecYEG and auxiliary proteins SecDF-YajC and YidC. Zn(2+) serves as cofactor.

Its subcellular location is the cell inner membrane. It is found in the cytoplasm. The enzyme catalyses ATP + H2O + cellular proteinSide 1 = ADP + phosphate + cellular proteinSide 2.. In terms of biological role, part of the Sec protein translocase complex. Interacts with the SecYEG preprotein conducting channel. Has a central role in coupling the hydrolysis of ATP to the transfer of proteins into and across the cell membrane, serving both as a receptor for the preprotein-SecB complex and as an ATP-driven molecular motor driving the stepwise translocation of polypeptide chains across the membrane. This Salmonella paratyphi B (strain ATCC BAA-1250 / SPB7) protein is Protein translocase subunit SecA.